The sequence spans 407 residues: MVNEYKKILLLKGFELMDDYHFTSIKSLLAYDLGLTTKMQEEYNRIKITDLMEKKFQGVACLDKLIELAKDMPSLKNLVNNLRKEKSKVAKKIKTQEKAPVKKINQEEVGLAAPAPTARNKLTSEARGRIPVAQKRKTPNKEKTEAKRNKVSQEQSKPPGPSGASTSAAVDHPPLPQTSSSTPSNTSFTPNQETQAQRQVDARRNVPQNDPVTVVVLKATAPFKYESPENGKSTMFHATVASKTQYFHVKVFDINLKEKFVRKKVITISDYSECKGVMEIKEASSVSDFNQNFEVPNRIIEIANKTPKISQLYKQASGTMVYGLFMLQKKSVHKKNTIYEIQDNTGSMDVVGSGKWHNIKCEKGDKLRLFCLQLRTVDRKLKLVCGSHSFIKVIKAKKNKEGPMNVN.

The 88-residue stretch at 1–88 folds into the Pyrin domain; the sequence is MVNEYKKILL…VNNLRKEKSK (88 aa). The tract at residues 108–207 is disordered; the sequence is EVGLAAPAPT…RQVDARRNVP (100 aa). A Nuclear localization signal motif is present at residues 131–137; that stretch reads PVAQKRK. Basic and acidic residues predominate over residues 139–148; sequence PNKEKTEAKR. The segment covering 177 to 190 has biased composition (low complexity); it reads QTSSSTPSNTSFTP. The 199-residue stretch at 196-394 folds into the HIN-200 domain; the sequence is AQRQVDARRN…CGSHSFIKVI (199 aa).

As to quaternary structure, participates in a ternary complex with YY1 and the YY1 target DNA element. Binds nucleolin and nucleophosmin/NPM/B23. As to expression, expressed constitutively in cells of the myeloid lineage. Found in promyelocyte stage cells as well as in all other stage cells including peripheral blood monocytes and granulocytes. Also appears in myeloblast cells in some cases of acute myeloid Leukemia.

The protein resides in the nucleus. The protein localises to the cytoplasm. In terms of biological role, may act as a transcriptional activator/repressor in the myeloid lineage. Plays a role in the granulocyte/monocyte cell-specific response to interferon. Stimulates the DNA binding of the transcriptional repressor protein YY1. This is Myeloid cell nuclear differentiation antigen (MNDA) from Homo sapiens (Human).